The following is a 284-amino-acid chain: Xyloglucan endotransglucosylase/hydrolase protein 22 (284 aa).

The first 21 residues, 1-21 (MAITYLLPLFLSLIITSSVSA), serve as a signal peptide directing secretion. The GH16 domain occupies 22-211 (NFQRDVEITW…WSKAPFTASY (190 aa)). The Nucleophile role is filled by Glu-97. Glu-101 acts as the Proton donor in catalysis. Residue Glu-101 coordinates xyloglucan. The N-linked (GlcNAc...) asparagine glycan is linked to Asn-105. Xyloglucan is bound by residues 114–116 (HTN), 124–126 (DKE), 190–191 (DW), and Gly-195. Cys-219 and Cys-228 form a disulfide bridge. Asn-230 is a glycosylation site (N-linked (GlcNAc...) asparagine). Cysteines 267 and 281 form a disulfide. A xyloglucan-binding site is contributed by Arg-272.

Belongs to the glycosyl hydrolase 16 family. XTH group 2 subfamily. Contains at least one intrachain disulfide bond essential for its enzymatic activity. Post-translationally, N-glycosylated; essential for its enzymatic activity. Highly expressed. Predominantly expressed in green siliques. Expressed in young expanding leaves, trichomes, lateral root primordia, vascular tissue, abscission zones and elongating hypocols. Following wind stimulation, it decreases in the leaves of wind-stimulated plants, while it strongly increases in sites around cells of the pith parenchyma, between the vascular elements, and within the epidermis.

It localises to the secreted. It is found in the cell wall. The protein resides in the extracellular space. The protein localises to the apoplast. It catalyses the reaction breaks a beta-(1-&gt;4) bond in the backbone of a xyloglucan and transfers the xyloglucanyl segment on to O-4 of the non-reducing terminal glucose residue of an acceptor, which can be a xyloglucan or an oligosaccharide of xyloglucan.. In terms of biological role, catalyzes xyloglucan endohydrolysis (XEH) and/or endotransglycosylation (XET). Cleaves and religates xyloglucan polymers, an essential constituent of the primary cell wall, and thereby participates in cell wall construction of growing tissues. Its induction in case of mechanical stress, suggests that it may contribute in the adaptive changes in morphogenesis by being recruited to alter tissues tensil strength, or flexibility, enabling adaptation to mechanically stressful environments. The sequence is that of Xyloglucan endotransglucosylase/hydrolase protein 22 (XTH22) from Arabidopsis thaliana (Mouse-ear cress).